We begin with the raw amino-acid sequence, 923 residues long: Probable ribosylation factor GTPase-activating protein cnt6 (923 aa).

Ser207 carries the phosphoserine modification. A compositionally biased stretch (basic and acidic residues) spans 444–455 (TTRRDKGREMHR). Residues 444–476 (TTRRDKGREMHRSQVIQTSGRPKSMAPPSPSPI) are disordered. Positions 526–632 (KIFKEGLLLV…WIEAICEAAK (107 aa)) constitute a PH domain. The region spanning 714 to 837 (NIFIQMLRKT…AFIDFAGVDA (124 aa)) is the Arf-GAP domain. The segment at 730-754 (CADCGSVKDVTWCSINIPVVLCIEC) adopts a C4-type zinc-finger fold.

The protein resides in the cytoplasm. It is found in the cell tip. In terms of biological role, GTPase-activating protein for the ADP ribosylation factor family. This is Probable ribosylation factor GTPase-activating protein cnt6 (cnt6) from Schizosaccharomyces pombe (strain 972 / ATCC 24843) (Fission yeast).